The chain runs to 289 residues: 4-diphosphocytidyl-2-C-methyl-D-erythritol kinase (289 aa).

The active site involves Lys-11. 93–103 (PLAAGLAGGSA) provides a ligand contact to ATP. Asp-135 is a catalytic residue.

It belongs to the GHMP kinase family. IspE subfamily.

The catalysed reaction is 4-CDP-2-C-methyl-D-erythritol + ATP = 4-CDP-2-C-methyl-D-erythritol 2-phosphate + ADP + H(+). It functions in the pathway isoprenoid biosynthesis; isopentenyl diphosphate biosynthesis via DXP pathway; isopentenyl diphosphate from 1-deoxy-D-xylulose 5-phosphate: step 3/6. Its function is as follows. Catalyzes the phosphorylation of the position 2 hydroxy group of 4-diphosphocytidyl-2C-methyl-D-erythritol. This is 4-diphosphocytidyl-2-C-methyl-D-erythritol kinase from Thermoanaerobacter sp. (strain X514).